The sequence spans 233 residues: Ion-translocating oxidoreductase complex subunit E (233 aa).

6 helical membrane passes run 18–38 (ALVQ…ATNA), 39–59 (LGLG…VSAL), 69–89 (IPIY…LINA), 92–112 (FGLY…CIVI), 128–148 (ALDG…LGAL), and 182–202 (PFLL…LLAG).

This sequence belongs to the NqrDE/RnfAE family. In terms of assembly, the complex is composed of six subunits: RnfA, RnfB, RnfC, RnfD, RnfE and RnfG.

Its subcellular location is the cell inner membrane. Functionally, part of a membrane-bound complex that couples electron transfer with translocation of ions across the membrane. This is Ion-translocating oxidoreductase complex subunit E from Yersinia pseudotuberculosis serotype IB (strain PB1/+).